We begin with the raw amino-acid sequence, 94 residues long: Host-modulation protein 11K (94 aa).

In terms of assembly, interacts with host GRB2; this interaction alters host cell environment by modulating host signaling pathways.

It localises to the host cytoplasm. Functionally, enhances viral DNA replication and virion release. Mechansitically, optimizes viral DNA replication by interacting with host GRB2 to inhibit the negative effect of ERK signaling on B19 viral replication. Plays a role in viral infectivity. Induces apoptosis of primary erythroid progenitor cells. The polypeptide is Host-modulation protein 11K (11K) (Human parvovirus B19 (strain HV) (HPV B19)).